The following is a 72-amino-acid chain: U1-sicaritoxin-Sdo1a (72 aa).

The first 24 residues, 1-24, serve as a signal peptide directing secretion; that stretch reads MMKKFTCFLLCATILCAIFCVSVA. The propeptide occupies 25 to 41; the sequence is EKFHKMKSDIERDETPM. 3 disulfide bridges follow: Cys-43–Cys-61, Cys-50–Cys-64, and Cys-60–Cys-69.

In terms of tissue distribution, expressed by the venom gland.

It localises to the secreted. This Hexophthalma dolichocephala (Afrotropical spider) protein is U1-sicaritoxin-Sdo1a.